Reading from the N-terminus, the 702-residue chain is Polyribonucleotide nucleotidyltransferase (702 aa).

Mg(2+)-binding residues include Asp493 and Asp499. The 61-residue stretch at 559 to 619 (PKVEIFNVDP…NLISQSKEYI (61 aa)) folds into the KH domain. Residues 643–702 (GEEFLGRVQKVVEFGVFVELKEGVDGLLHNSKIKEKLEVGHEIKVKVAEIKNGKVSLDLA) form the S1 motif domain.

It belongs to the polyribonucleotide nucleotidyltransferase family. Mg(2+) is required as a cofactor.

It is found in the cytoplasm. It carries out the reaction RNA(n+1) + phosphate = RNA(n) + a ribonucleoside 5'-diphosphate. Involved in mRNA degradation. Catalyzes the phosphorolysis of single-stranded polyribonucleotides processively in the 3'- to 5'-direction. This is Polyribonucleotide nucleotidyltransferase from Campylobacter lari (strain RM2100 / D67 / ATCC BAA-1060).